The following is a 440-amino-acid chain: Glutamyl-tRNA reductase (440 aa).

Residues 47-50 (TCNR), S110, 115-117 (ERE), and Q121 contribute to the substrate site. C48 serves as the catalytic Nucleophile. 192–197 (GTGAYA) serves as a coordination point for NADP(+).

This sequence belongs to the glutamyl-tRNA reductase family. In terms of assembly, homodimer.

It catalyses the reaction (S)-4-amino-5-oxopentanoate + tRNA(Glu) + NADP(+) = L-glutamyl-tRNA(Glu) + NADPH + H(+). It functions in the pathway porphyrin-containing compound metabolism; protoporphyrin-IX biosynthesis; 5-aminolevulinate from L-glutamyl-tRNA(Glu): step 1/2. Its function is as follows. Catalyzes the NADPH-dependent reduction of glutamyl-tRNA(Glu) to glutamate 1-semialdehyde (GSA). This chain is Glutamyl-tRNA reductase, found in Paenarthrobacter aurescens (strain TC1).